Reading from the N-terminus, the 483-residue chain is Trehalose-6-phosphate synthase (483 aa).

D-glucose 6-phosphate is bound at residue Arg22. 42–43 (GG) serves as a coordination point for UDP-alpha-D-glucose. Residues Tyr94 and Asp148 each coordinate D-glucose 6-phosphate. Residues Arg290 and Lys295 each contribute to the UDP-alpha-D-glucose site. Arg328 serves as a coordination point for D-glucose 6-phosphate. 393-397 (LVAKE) is a binding site for UDP-alpha-D-glucose.

It belongs to the glycosyltransferase 20 family. As to quaternary structure, homotetramer.

The enzyme catalyses ADP-alpha-D-glucose + D-glucose 6-phosphate = alpha,alpha-trehalose 6-phosphate + ADP + H(+). The catalysed reaction is CDP-alpha-D-glucose + D-glucose 6-phosphate = alpha,alpha-trehalose 6-phosphate + CDP + H(+). It catalyses the reaction GDP-alpha-D-glucose + D-glucose 6-phosphate = alpha,alpha-trehalose 6-phosphate + GDP + H(+). It carries out the reaction TDP-alpha-D-glucose + D-glucose 6-phosphate = 5-methyl-UDP + alpha,alpha-trehalose 6-phosphate + H(+). The enzyme catalyses D-glucose 6-phosphate + UDP-alpha-D-glucose = alpha,alpha-trehalose 6-phosphate + UDP + H(+). The protein operates within glycan biosynthesis; trehalose biosynthesis. Functionally, probably involved in the osmoprotection via the biosynthesis of trehalose and in the production of glycogen and alpha-glucan via the TreS-Pep2 branch involved in the biosynthesis of maltose-1-phosphate (M1P). Catalyzes the transfer of glucose from UDP-glucose (UDP-Glc) to D-glucose 6-phosphate (Glc-6-P) to form trehalose-6-phosphate. Probably also able to use ADP-Glc, CDP-Glc, GDP-Glc and TDP-Glc as glucosyl donors. In Mycobacterium sp. (strain JLS), this protein is Trehalose-6-phosphate synthase.